The chain runs to 529 residues: Calcium/calmodulin-dependent protein kinase type II subunit gamma (529 aa).

The Protein kinase domain maps to 14 to 272; sequence YQLFEELGKG…ADQALKHPWV (259 aa). Residues 20–28 and K43 contribute to the ATP site; that span reads LGKGAFSVV. The active-site Proton acceptor is the D136. The tract at residues 283 to 292 is autoinhibitory domain; sequence HRQETVECLR. Residues T287, T306, and T307 each carry the phosphothreonine; by autocatalysis modification. Residues 294–316 form a calmodulin-binding region; sequence FNARRKLKGAILTTMLVSRNFSA. A phosphoserine mark is found at S311, S334, S349, S352, and S455. Residues 324–353 form a disordered region; sequence KSDGGVKKRKSSSSVHLMPQSNNKNSLVSP. The span at 342 to 352 shows a compositional bias: polar residues; sequence PQSNNKNSLVS.

The protein belongs to the protein kinase superfamily. CAMK Ser/Thr protein kinase family. CaMK subfamily. In terms of assembly, CAMK2 is composed of 4 different chains: alpha (CAMK2A), beta (CAMK2B), gamma (CAMK2G), and delta (CAMK2D). The different isoforms assemble into homo- or heteromultimeric holoenzymes composed of 12 subunits with two hexameric rings stacked one on top of the other. In terms of processing, autophosphorylation of Thr-287 following activation by Ca(2+)/calmodulin. Phosphorylation of Thr-287 locks the kinase into an activated state.

It is found in the sarcoplasmic reticulum membrane. It carries out the reaction L-seryl-[protein] + ATP = O-phospho-L-seryl-[protein] + ADP + H(+). It catalyses the reaction L-threonyl-[protein] + ATP = O-phospho-L-threonyl-[protein] + ADP + H(+). Activated by Ca(2+)/calmodulin. Binding of calmodulin results in conformational change that relieves intrasteric autoinhibition and allows autophosphorylation of Thr-287 which turns the kinase in a constitutively active form and confers to the kinase a Ca(2+)-independent activity. Its function is as follows. Calcium/calmodulin-dependent protein kinase that functions autonomously after Ca(2+)/calmodulin-binding and autophosphorylation, and is involved in sarcoplasmic reticulum Ca(2+) transport in skeletal muscle and may function in dendritic spine and synapse formation and neuronal plasticity. In slow-twitch muscles, is involved in regulation of sarcoplasmic reticulum (SR) Ca(2+) transport and in fast-twitch muscle participates in the control of Ca(2+) release from the SR through phosphorylation of the ryanodine receptor-coupling factor triadin. In the central nervous system, it is involved in the regulation of neurite formation and arborization. It may participate in the promotion of dendritic spine and synapse formation and maintenance of synaptic plasticity which enables long-term potentiation (LTP) and hippocampus-dependent learning. In response to interferon-gamma (IFN-gamma) stimulation, catalyzes phosphorylation of STAT1, stimulating the JAK-STAT signaling pathway. The polypeptide is Calcium/calmodulin-dependent protein kinase type II subunit gamma (Camk2g) (Mus musculus (Mouse)).